The following is a 301-amino-acid chain: Acetylglutamate kinase (301 aa).

Substrate is bound by residues 72–73 (GG), Arg-94, and Asn-199.

The protein belongs to the acetylglutamate kinase family. ArgB subfamily.

It localises to the cytoplasm. The catalysed reaction is N-acetyl-L-glutamate + ATP = N-acetyl-L-glutamyl 5-phosphate + ADP. It participates in amino-acid biosynthesis; L-arginine biosynthesis; N(2)-acetyl-L-ornithine from L-glutamate: step 2/4. Functionally, catalyzes the ATP-dependent phosphorylation of N-acetyl-L-glutamate. This Bartonella bacilliformis (strain ATCC 35685 / KC583 / Herrer 020/F12,63) protein is Acetylglutamate kinase.